Reading from the N-terminus, the 208-residue chain is uncharacterized protein (208 aa).

Positions 1-16 are cleaved as a signal peptide; the sequence is MTRVALLTTGRELSQA. Disordered stretches follow at residues 1–95 and 145–176; these read MTRV…VRGQ and RVTK…SAAD. Residues 16–25 show a composition bias toward low complexity; that stretch reads AAPPARARTP. Positions 32 to 43 are enriched in basic and acidic residues; sequence RGERPDDGGHAP. Residues 44–54 show a composition bias toward basic residues; it reads HRDRRVNQRRR. A compositionally biased stretch (basic and acidic residues) spans 55–95; sequence QVGDRRAQRGVDEHPWRRPDERPNDHLPQRNSERPEGVRGQ. Polar residues-rich tracts occupy residues 148 to 158 and 167 to 176; these read KVSSSGPNSTP and GTNNAPSAAD.

This is an uncharacterized protein from Mycobacterium tuberculosis (strain CDC 1551 / Oshkosh).